The primary structure comprises 144 residues: 3-hydroxyacyl-[acyl-carrier-protein] dehydratase FabZ (144 aa).

H49 is an active-site residue.

Belongs to the thioester dehydratase family. FabZ subfamily.

The protein localises to the cytoplasm. It catalyses the reaction a (3R)-hydroxyacyl-[ACP] = a (2E)-enoyl-[ACP] + H2O. Involved in unsaturated fatty acids biosynthesis. Catalyzes the dehydration of short chain beta-hydroxyacyl-ACPs and long chain saturated and unsaturated beta-hydroxyacyl-ACPs. This is 3-hydroxyacyl-[acyl-carrier-protein] dehydratase FabZ from Alkaliphilus oremlandii (strain OhILAs) (Clostridium oremlandii (strain OhILAs)).